Here is a 128-residue protein sequence, read N- to C-terminus: Transcription antitermination protein NusB (128 aa).

It belongs to the NusB family.

In terms of biological role, involved in transcription antitermination. Required for transcription of ribosomal RNA (rRNA) genes. Binds specifically to the boxA antiterminator sequence of the ribosomal RNA (rrn) operons. In Staphylococcus carnosus (strain TM300), this protein is Transcription antitermination protein NusB.